The sequence spans 422 residues: UDP-N-acetylglucosamine 1-carboxyvinyltransferase 2 (422 aa).

22 to 23 is a binding site for phosphoenolpyruvate; sequence KN. R93 is a UDP-N-acetyl-alpha-D-glucosamine binding site. C117 functions as the Proton donor in the catalytic mechanism. At C117 the chain carries 2-(S-cysteinyl)pyruvic acid O-phosphothioketal. Residues 122 to 126, D308, and I330 each bind UDP-N-acetyl-alpha-D-glucosamine; that span reads RPVDL.

The protein belongs to the EPSP synthase family. MurA subfamily.

It is found in the cytoplasm. The enzyme catalyses phosphoenolpyruvate + UDP-N-acetyl-alpha-D-glucosamine = UDP-N-acetyl-3-O-(1-carboxyvinyl)-alpha-D-glucosamine + phosphate. The protein operates within cell wall biogenesis; peptidoglycan biosynthesis. Its function is as follows. Cell wall formation. Adds enolpyruvyl to UDP-N-acetylglucosamine. The chain is UDP-N-acetylglucosamine 1-carboxyvinyltransferase 2 from Legionella pneumophila (strain Lens).